The following is a 127-amino-acid chain: Small ribosomal subunit protein uS13 (127 aa).

This sequence belongs to the universal ribosomal protein uS13 family. Part of the 30S ribosomal subunit. Forms a loose heterodimer with protein S19. Forms two bridges to the 50S subunit in the 70S ribosome.

In terms of biological role, located at the top of the head of the 30S subunit, it contacts several helices of the 16S rRNA. In the 70S ribosome it contacts the 23S rRNA (bridge B1a) and protein L5 of the 50S subunit (bridge B1b), connecting the 2 subunits; these bridges are implicated in subunit movement. Contacts the tRNAs in the A and P-sites. This is Small ribosomal subunit protein uS13 from Roseiflexus sp. (strain RS-1).